Consider the following 977-residue polypeptide: Disks large-associated protein 3 (977 aa).

Residues 1 to 10 are compositionally biased toward basic and acidic residues; that stretch reads MRGYHGDRGS. 6 disordered regions span residues 1–30, 52–90, 137–167, 181–289, 398–417, and 529–582; these read MRGY…PAAR, AGLG…SSTF, FHTL…ESPS, AKSH…CLDA, AMGD…SPKA, and PGSS…SADG. The segment covering 53-73 has biased composition (low complexity); sequence GLGHLSPEGPLSLSEGPSSVG. Ser58 is modified (phosphoserine). Residues 74 to 85 are compositionally biased toward gly residues; that stretch reads PEGGPGGVGAGG. A compositionally biased stretch (basic and acidic residues) spans 189-201; that stretch reads PGKRDYNGPKAEG. The span at 202–212 shows a compositional bias: low complexity; that stretch reads RSSSGGDSYSG. Residues 221–245 show a composition bias toward basic residues; sequence SHHHHHHHHHHHHQSRHGKRSKSKD. Over residues 258–271 the composition is skewed to low complexity; sequence GWWSSDDNLDSDSG. A phosphoserine mark is found at Ser404, Ser407, Ser410, and Ser414. Over residues 538 to 547 the composition is skewed to pro residues; that stretch reads APPPIPPGSQ. Residues Ser641 and Ser643 each carry the phosphoserine modification. Disordered stretches follow at residues 739 to 788 and 906 to 939; these read EGYP…RTSP and EEKK…RQRQ. Pro residues predominate over residues 754-763; it reads PGPPPVPAPG. 2 stretches are compositionally biased toward basic and acidic residues: residues 767–777 and 925–939; these read GRRDSWMERGS and PVKE…RQRQ. Residues Ser930, Ser933, and Ser965 each carry the phosphoserine modification.

It belongs to the SAPAP family. Interacts with DLG1 and DLG4/PSD-95. Expressed in most brain regions.

It localises to the cell membrane. The protein resides in the postsynaptic density. The protein localises to the synapse. Functionally, may play a role in the molecular organization of synapses and neuronal cell signaling. Could be an adapter protein linking ion channel to the subsynaptic cytoskeleton. May induce enrichment of PSD-95/SAP90 at the plasma membrane. This is Disks large-associated protein 3 (Dlgap3) from Rattus norvegicus (Rat).